Consider the following 449-residue polypeptide: Protein king tubby (449 aa).

Residues 123-197 (SAVHSANSTQ…GTGGESEGDV (75 aa)) are disordered. Polar residues predominate over residues 124 to 145 (AVHSANSTQSQRPRPRQHSFSD). At S142 the chain carries Phosphoserine. The segment covering 154–166 (NRNVAAAAPVRPA) has biased composition (low complexity). Positions 183–192 (NGTGNGTGGE) are enriched in gly residues.

It belongs to the TUB family.

The protein resides in the cytoplasm. The protein localises to the nucleus. It localises to the cell projection. Its subcellular location is the cilium membrane. It is found in the rhabdomere. This is Protein king tubby from Drosophila ananassae (Fruit fly).